The chain runs to 472 residues: Carboxypeptidase Q (472 aa).

Positions 1–20 are cleaved as a signal peptide; that stretch reads MKFLIFAFFGGVHLLSLCSG. Residues 21–44 constitute a propeptide that is removed on maturation; sequence KAICKNGISKRTFEEIKEEIASCG. 2 N-linked (GlcNAc...) asparagine glycosylation sites follow: Asn-61 and Asn-179. Zn(2+)-binding residues include His-290 and Asp-302. The active-site Nucleophile is the Glu-336. Glu-337 contacts Zn(2+). Residues Asn-353 and Asn-356 are each glycosylated (N-linked (GlcNAc...) asparagine). Asp-364 contributes to the Zn(2+) binding site. Residue Asn-396 is glycosylated (N-linked (GlcNAc...) asparagine). Zn(2+) is bound at residue His-434.

This sequence belongs to the peptidase M28 family. Homodimer. The monomeric form is inactive while the homodimer is active. In terms of processing, N-glycosylated. The secreted form is modified by hybrid or complex type oligosaccharide chains. Mainly detected in blood plasma. Abundant in placenta and kidney. Present at low level in muscles, liver and skin fibroblasts. Not detected in brain or white blood cells (at protein level).

It is found in the endoplasmic reticulum. The protein localises to the golgi apparatus. The protein resides in the lysosome. It localises to the secreted. Functionally, carboxypeptidase that may play an important role in the hydrolysis of circulating peptides. Catalyzes the hydrolysis of dipeptides with unsubstituted terminals into amino acids. May play a role in the liberation of thyroxine hormone from its thyroglobulin (Tg) precursor. The sequence is that of Carboxypeptidase Q (CPQ) from Homo sapiens (Human).